Reading from the N-terminus, the 116-residue chain is Large ribosomal subunit protein bL17 (116 aa).

The protein belongs to the bacterial ribosomal protein bL17 family. In terms of assembly, part of the 50S ribosomal subunit. Contacts protein L32.

The chain is Large ribosomal subunit protein bL17 from Synechococcus sp. (strain JA-2-3B'a(2-13)) (Cyanobacteria bacterium Yellowstone B-Prime).